The following is a 71-amino-acid chain: Alpha-cobratoxin (71 aa).

Cystine bridges form between Cys3–Cys20, Cys14–Cys41, Cys26–Cys30, Cys45–Cys56, and Cys57–Cys62.

This sequence belongs to the three-finger toxin family. Long-chain subfamily. Type II alpha-neurotoxin sub-subfamily. As to quaternary structure, monomer, homo- or heterodimer with cytotoxins 1 (P60305), 2 (AC P01445), and 3 (AC P01446); disulfide-linked. Post-translationally, in homodimer alpha-cobratoxin, selective reduction of Cys(26)-Cys(30) in one subunit does not affect the activity against the alpha-7/CHRNA7 nAChR, whereas its reduction in both subunits almost prevents alpha-7/CHRNA7 nAChR recognition. On the contrary, reduction of one or both Cys(26)-Cys(30) disulfide bonds in the homodimer considerably potentiates inhibition of the alpha-3-beta-2/CHRNA3-CHRNB2 nAChR by the toxin. In terms of tissue distribution, expressed by the venom gland.

Its subcellular location is the secreted. In terms of biological role, monomer: binds with high affinity to muscular (alpha-1-beta-1-gamma-delta/CHRNA1-CHRNB1-CHRNG-CHRND) nAChR (tested on Torpedo californica, Kd=0.2-4.5 nM) and neuronal alpha-7/CHRNA7 nicotinic acetylcholine receptors (Kd=13-105 nM). Also inhibits GABA(A) channels. Heteropentamer targets studied are composed of alpha-1-beta-3-gamma-2 (GABRA1-GABRB3-GABRG2) subunits (IC(50)=236 nM), alpha-1-beta-2-gamma-2 (GABRA1-GABRB2-GABRG2) subunits (IC(50)=469 nM), alpha-2-beta-2-gamma-2 (GABRA2-GABRB2-GABRG2) subunits (IC(50)=485 nM), alpha-5-beta-3-gamma-2 (GABRA5-GABRB3-GABRG2) subunits (IC(50)=635 nM), and alpha-2-beta-3-gamma-2 (GABRA2-GABRB3-GABRG2) subunits (IC(50)=1099 nM) (activated by 10 uM GABA). Homodimer: binds with high affinity (but lower than the monomeric form) to muscular (IC(50)=9.7 nM) and with low affinity to neuronal alpha-7/CHRNA7 nAChRs (IC(50)=1370 nM). However, it acquires (compared to the monomeric form) the capacity to block alpha-3/beta-2 (CHRNA3/CHRNB2) nAChRs. Functionally, heterodimer with cytotoxin 3 (AC P01446): is slightly more active than the homodimer in inhibiting alpha-7/CHRNA7 nAChR and is considerably more active in blocking the alpha-3-beta-2/CHRNA3-CHRNB2 nAChR. This chain is Alpha-cobratoxin, found in Naja kaouthia (Monocled cobra).